Here is a 195-residue protein sequence, read N- to C-terminus: Imidazoleglycerol-phosphate dehydratase (195 aa).

Belongs to the imidazoleglycerol-phosphate dehydratase family.

The protein resides in the cytoplasm. The enzyme catalyses D-erythro-1-(imidazol-4-yl)glycerol 3-phosphate = 3-(imidazol-4-yl)-2-oxopropyl phosphate + H2O. Its pathway is amino-acid biosynthesis; L-histidine biosynthesis; L-histidine from 5-phospho-alpha-D-ribose 1-diphosphate: step 6/9. In Burkholderia ambifaria (strain MC40-6), this protein is Imidazoleglycerol-phosphate dehydratase.